Here is a 510-residue protein sequence, read N- to C-terminus: MIWHVQNENFILDSTRIFMKAFHLLLFHGSFIFPECILIFGLILLLMIDLTSDQKDRPWFYFISSTSLVISITALLFRWREEPIISFSGNFQTNNFNEIFQFLILLCSTLCIPLSVEYIECTEMAITEFLLFVLTATLGGMFLCGANDLITIFVALECFSLCSYLLSGYTKRDLRSNEATMKYLLMGGASSSILVYGFSWLYGLSGGEIELQEIVNGLINTQMYNSPGISIALIFITVGLGFKLSLAPFHQWTPDVYEGSPTPVVAFLSVTSKVAALALATRILDIPFYFSSNEWHLLLEILAILSMILGNLLAITQTSMKRMLAYSSIGQIGYVIIGIIVGDSNDGYASMITYMLFYISMNLGTFACIVLFGLRTGTDNIRDYAGLYTKDPFLALSLALCLLSLGGLPPLAGFFGKLYLFWCGWQAGLYFLVSIGLLTSVLSIYYYLKIIKLLMTGRNQEITPYVRNYRRSPLRSNNSIELSMTVCVIASTILGISMNPILAIAQDTLF.

The next 14 membrane-spanning stretches (helical) occupy residues 24 to 44 (LLLFHGSFIFPECILIFGLIL), 59 to 79 (WFYFISSTSLVISITALLFRW), 99 to 119 (IFQFLILLCSTLCIPLSVEYI), 124 to 144 (MAITEFLLFVLTATLGGMFLC), 149 to 169 (LITIFVALECFSLCSYLLSGY), 184 to 204 (LLMGGASSSILVYGFSWLYGL), 229 to 249 (ISIALIFITVGLGFKLSLAPF), 261 to 281 (PTPVVAFLSVTSKVAALALAT), 295 to 315 (WHLLLEILAILSMILGNLLAI), 323 to 343 (MLAYSSIGQIGYVIIGIIVGD), 354 to 374 (YMLFYISMNLGTFACIVLFGL), 395 to 415 (ALSLALCLLSLGGLPPLAGFF), 418 to 438 (LYLFWCGWQAGLYFLVSIGLL), and 484 to 504 (MTVCVIASTILGISMNPILAI).

The protein belongs to the complex I subunit 2 family. NDH is composed of at least 16 different subunits, 5 of which are encoded in the nucleus.

The protein resides in the plastid. It is found in the chloroplast thylakoid membrane. The enzyme catalyses a plastoquinone + NADH + (n+1) H(+)(in) = a plastoquinol + NAD(+) + n H(+)(out). It carries out the reaction a plastoquinone + NADPH + (n+1) H(+)(in) = a plastoquinol + NADP(+) + n H(+)(out). Functionally, NDH shuttles electrons from NAD(P)H:plastoquinone, via FMN and iron-sulfur (Fe-S) centers, to quinones in the photosynthetic chain and possibly in a chloroplast respiratory chain. The immediate electron acceptor for the enzyme in this species is believed to be plastoquinone. Couples the redox reaction to proton translocation, and thus conserves the redox energy in a proton gradient. This chain is NAD(P)H-quinone oxidoreductase subunit 2 B, chloroplastic, found in Zea mays (Maize).